Reading from the N-terminus, the 121-residue chain is Basic phospholipase A2 caudoxin (121 aa).

7 cysteine pairs are disulfide-bonded: Cys-25–Cys-114, Cys-27–Cys-43, Cys-42–Cys-94, Cys-48–Cys-121, Cys-49–Cys-87, Cys-56–Cys-80, and Cys-74–Cys-85. Residues Tyr-26, Gly-28, and Gly-30 each contribute to the Ca(2+) site. Residue His-46 is part of the active site. Position 47 (Asp-47) interacts with Ca(2+). Residue Asp-88 is part of the active site.

This sequence belongs to the phospholipase A2 family. Group II subfamily. D49 sub-subfamily. In terms of assembly, monomer. It depends on Ca(2+) as a cofactor. As to expression, expressed by the venom gland.

The protein resides in the secreted. It carries out the reaction a 1,2-diacyl-sn-glycero-3-phosphocholine + H2O = a 1-acyl-sn-glycero-3-phosphocholine + a fatty acid + H(+). Snake venom phospholipase A2 (PLA2) that shows anticoagulant activity and presynaptic neurotoxicity. Acts as an anticoagulant toxin by inhibiting prothrombinase complex formation. Shows about 50% of the prothrombinase complex inhibition compared to CM-IV of N.nigricollis venom. Acts as a neurotoxin by inhibiting neuromuscular transmission by blocking acetylcholine release from the nerve termini. PLA2 catalyzes the calcium-dependent hydrolysis of the 2-acyl groups in 3-sn-phosphoglycerides. The protein is Basic phospholipase A2 caudoxin of Bitis caudalis (Horned adder).